Reading from the N-terminus, the 109-residue chain is Non-structural protein of 12.7 kDa (109 aa).

It belongs to the coronaviruses ns12.7 protein family.

This chain is Non-structural protein of 12.7 kDa, found in Sus scrofa (Pig).